A 164-amino-acid polypeptide reads, in one-letter code: Phosphopantetheine adenylyltransferase (164 aa).

Residue Ser-11 coordinates substrate. Residues 11–12 (SF) and His-19 each bind ATP. The substrate site is built by Lys-43, Leu-75, and Arg-89. ATP is bound by residues 90-92 (GLR), Glu-100, and 125-131 (YGYLSSS).

Belongs to the bacterial CoaD family. As to quaternary structure, homohexamer. Mg(2+) is required as a cofactor.

The protein resides in the cytoplasm. The enzyme catalyses (R)-4'-phosphopantetheine + ATP + H(+) = 3'-dephospho-CoA + diphosphate. The protein operates within cofactor biosynthesis; coenzyme A biosynthesis; CoA from (R)-pantothenate: step 4/5. Functionally, reversibly transfers an adenylyl group from ATP to 4'-phosphopantetheine, yielding dephospho-CoA (dPCoA) and pyrophosphate. The chain is Phosphopantetheine adenylyltransferase from Geobacter sulfurreducens (strain ATCC 51573 / DSM 12127 / PCA).